The primary structure comprises 557 residues: uncharacterized protein (557 aa).

Positions 70-224 (KVVEKMNGKA…FNLVSLLKPG (155 aa)) constitute a Helicase ATP-binding domain. Residue 82–90 (ADEVGLGKT) coordinates ATP. Positions 175–178 (DEAH) match the DEAH box motif. Residues 363–524 (QVVDLIKKID…NFEEHLHDIL (162 aa)) enclose the Helicase C-terminal domain.

Belongs to the SNF2/RAD54 helicase family.

This is an uncharacterized protein from Bacillus subtilis (strain 168).